The sequence spans 520 residues: Laccase (520 aa).

The N-terminal stretch at 1 to 21 (MHTFLRSTALVVAGLSARALA) is a signal peptide. 2 consecutive Plastocyanin-like domains span residues 22-148 (SIGP…FVVY) and 160-304 (VDDD…ILRY). The N-linked (GlcNAc...) asparagine glycan is linked to asparagine 75. The Cu cation site is built by histidine 85, histidine 87, histidine 130, and histidine 132. Cystine bridges form between cysteine 106–cysteine 509 and cysteine 138–cysteine 227. Asparagine 352 and asparagine 402 each carry an N-linked (GlcNAc...) asparagine glycan. One can recognise a Plastocyanin-like 3 domain in the interval 373–496 (TVPVLLQILS…VFAEDIPDVA (124 aa)). Residues histidine 418, histidine 421, histidine 423, histidine 473, cysteine 474, histidine 475, and histidine 479 each coordinate Cu cation.

This sequence belongs to the multicopper oxidase family. Cu cation serves as cofactor.

The protein localises to the secreted. It carries out the reaction 4 hydroquinone + O2 = 4 benzosemiquinone + 2 H2O. Its function is as follows. Lignin degradation and detoxification of lignin-derived products. The sequence is that of Laccase (LAC) from Phlebia radiata (White-rot fungus).